The primary structure comprises 262 residues: MAGTTAEYISHHLSFLASGDGFWAVHLDTLFFSLLAGVIFLFVFSRVAKNATSGVPGKLQCFVEIVIGWVDGLVKDNFHGPRNVIAPLALTIFCWVFIMNAIDLVPVDFLPQLANMFGIHYLRAVPTADISATLGMSICVFFLILFYTVKSKGFGGLVKEYTLHPFNHWAFIPVNFILETVTLLAKPISLAFRLFGNMYAGELIFILIAVMYMADNFALQALGIPLHLVWAIFHILVITLQAFIFMMLTIVYLSIAYNKADH.

Helical transmembrane passes span 24-44 (AVHL…LFVF), 84-104 (VIAP…AIDL), 129-149 (DISA…FYTV), 194-214 (LFGN…MYMA), and 228-248 (LVWA…FMML).

The protein belongs to the ATPase A chain family. F-type ATPases have 2 components, CF(1) - the catalytic core - and CF(0) - the membrane proton channel. CF(1) has five subunits: alpha(3), beta(3), gamma(1), delta(1), epsilon(1). CF(0) has three main subunits: a(1), b(2) and c(9-12). The alpha and beta chains form an alternating ring which encloses part of the gamma chain. CF(1) is attached to CF(0) by a central stalk formed by the gamma and epsilon chains, while a peripheral stalk is formed by the delta and b chains.

It is found in the cell inner membrane. Functionally, key component of the proton channel; it plays a direct role in the translocation of protons across the membrane. The chain is ATP synthase subunit a from Actinobacillus pleuropneumoniae serotype 3 (strain JL03).